Here is a 687-residue protein sequence, read N- to C-terminus: Polyphosphate kinase (687 aa).

Position 45 (Asn-45) interacts with ATP. Mg(2+) contacts are provided by Arg-375 and Arg-405. His-435 functions as the Phosphohistidine intermediate in the catalytic mechanism. ATP-binding residues include Tyr-472, Arg-568, and His-596.

This sequence belongs to the polyphosphate kinase 1 (PPK1) family. Requires Mg(2+) as cofactor. Post-translationally, an intermediate of this reaction is the autophosphorylated ppk in which a phosphate is covalently linked to a histidine residue through a N-P bond.

It catalyses the reaction [phosphate](n) + ATP = [phosphate](n+1) + ADP. Catalyzes the reversible transfer of the terminal phosphate of ATP to form a long-chain polyphosphate (polyP). This chain is Polyphosphate kinase, found in Burkholderia ambifaria (strain MC40-6).